A 901-amino-acid polypeptide reads, in one-letter code: Probable dipeptidyl-aminopeptidase B (901 aa).

Residues 1–22 show a composition bias toward low complexity; sequence MSSPRPSTSSTSSDSGLSVDTT. The interval 1–67 is disordered; it reads MSSPRPSTSS…EPFLPSAKKQ (67 aa). Topologically, residues 1–76 are cytoplasmic; it reads MSSPRPSTSS…QAASGSRTSR (76 aa). A helical; Signal-anchor for type II membrane protein membrane pass occupies residues 77–97; that stretch reads LIWGLVILCVAGWLWGLVLFV. The Vacuolar portion of the chain corresponds to 98-901; sequence TQNRSAQQSV…VKRSLPMLVK (804 aa). Residues asparagine 334 and asparagine 625 are each glycosylated (N-linked (GlcNAc...) asparagine). The Charge relay system role is filled by serine 739. Asparagine 793 carries N-linked (GlcNAc...) asparagine glycosylation. Active-site charge relay system residues include aspartate 816 and histidine 849.

The protein belongs to the peptidase S9B family.

Its subcellular location is the vacuole membrane. The enzyme catalyses Release of an N-terminal dipeptide, Xaa-Yaa-|-Zaa-, from a polypeptide, preferentially when Yaa is Pro, provided Zaa is neither Pro nor hydroxyproline.. Its function is as follows. Type IV dipeptidyl-peptidase which removes N-terminal dipeptides sequentially from polypeptides having unsubstituted N-termini provided that the penultimate residue is proline. The sequence is that of Probable dipeptidyl-aminopeptidase B (dapB) from Aspergillus niger (strain ATCC MYA-4892 / CBS 513.88 / FGSC A1513).